Reading from the N-terminus, the 504-residue chain is Galactan beta-1,4-galactosyltransferase GALS3 (504 aa).

Residues 30-50 traverse the membrane as a helical segment; sequence LTFMALLVLCTLATLLPFIPS. Residues 242–456 form the GT92 domain; it reads DYLYCGSSLY…YHGSISQRRE (215 aa).

This sequence belongs to the glycosyltransferase 92 family. In terms of tissue distribution, expressed in root caps, mature leaves, top of the stems and seeds.

The protein localises to the golgi apparatus membrane. Its function is as follows. Involved in the biosynthesis of beta-1,4-galactan. Beta-1,4-galactans are abundant polysaccharides in plant cell walls and are found as side-chain of rhamnogalacturonan I, which is a major component of pectin. This chain is Galactan beta-1,4-galactosyltransferase GALS3, found in Arabidopsis thaliana (Mouse-ear cress).